The chain runs to 226 residues: Pyridoxal 5'-phosphate synthase subunit PdxT (226 aa).

60–62 (GES) contacts L-glutamine. Cysteine 92 (nucleophile) is an active-site residue. L-glutamine is bound by residues arginine 121 and 150–151 (IR). Catalysis depends on charge relay system residues histidine 191 and glutamate 193.

This sequence belongs to the glutaminase PdxT/SNO family. As to quaternary structure, in the presence of PdxS, forms a dodecamer of heterodimers. Only shows activity in the heterodimer.

The enzyme catalyses aldehydo-D-ribose 5-phosphate + D-glyceraldehyde 3-phosphate + L-glutamine = pyridoxal 5'-phosphate + L-glutamate + phosphate + 3 H2O + H(+). It carries out the reaction L-glutamine + H2O = L-glutamate + NH4(+). The protein operates within cofactor biosynthesis; pyridoxal 5'-phosphate biosynthesis. In terms of biological role, catalyzes the hydrolysis of glutamine to glutamate and ammonia as part of the biosynthesis of pyridoxal 5'-phosphate. The resulting ammonia molecule is channeled to the active site of PdxS. The polypeptide is Pyridoxal 5'-phosphate synthase subunit PdxT (Nocardia farcinica (strain IFM 10152)).